We begin with the raw amino-acid sequence, 503 residues long: Protein FAM124A (503 aa).

A disordered region spans residues 434–470; it reads LAQSDTVPGRQNHSSDSLHSVSDISSSPCPVFPSTPA. The span at 436-445 shows a compositional bias: polar residues; that stretch reads QSDTVPGRQN. Residues 447-460 show a composition bias toward low complexity; the sequence is SSDSLHSVSDISSS.

This sequence belongs to the FAM124 family.

This chain is Protein FAM124A (fam124a), found in Xenopus tropicalis (Western clawed frog).